A 119-amino-acid chain; its full sequence is Ribosome-binding factor A (119 aa).

It belongs to the RbfA family. As to quaternary structure, monomer. Binds 30S ribosomal subunits, but not 50S ribosomal subunits or 70S ribosomes.

It is found in the cytoplasm. Its function is as follows. One of several proteins that assist in the late maturation steps of the functional core of the 30S ribosomal subunit. Associates with free 30S ribosomal subunits (but not with 30S subunits that are part of 70S ribosomes or polysomes). Required for efficient processing of 16S rRNA. May interact with the 5'-terminal helix region of 16S rRNA. The protein is Ribosome-binding factor A of Buchnera aphidicola subsp. Acyrthosiphon pisum (strain Tuc7).